The primary structure comprises 103 residues: MTDLKITLVNEDGESTISGKGHPLPAPLIFPPIYCFCFIQYKTEGKLWDKNDFQIKSGKIEFGGEEYDITESKGTWSKDDEENHIKVSLHLIVPPKKIFQKNF.

The protein belongs to the csb family. In terms of processing, O-glycosylated.

The protein resides in the cell surface. In terms of biological role, cell-cell adhesion during early development. This is Glycoprotein 24B (csbB) from Dictyostelium discoideum (Social amoeba).